A 282-amino-acid polypeptide reads, in one-letter code: Bis(5'-nucleosyl)-tetraphosphatase, symmetrical (282 aa).

This sequence belongs to the Ap4A hydrolase family.

It catalyses the reaction P(1),P(4)-bis(5'-adenosyl) tetraphosphate + H2O = 2 ADP + 2 H(+). Hydrolyzes diadenosine 5',5'''-P1,P4-tetraphosphate to yield ADP. The chain is Bis(5'-nucleosyl)-tetraphosphatase, symmetrical from Salmonella agona (strain SL483).